The primary structure comprises 159 residues: Ribosomal RNA large subunit methyltransferase H (159 aa).

S-adenosyl-L-methionine is bound by residues Leu76, Gly108, and 127–132; that span reads FSKMTF.

The protein belongs to the RNA methyltransferase RlmH family. As to quaternary structure, homodimer.

The protein resides in the cytoplasm. It catalyses the reaction pseudouridine(1915) in 23S rRNA + S-adenosyl-L-methionine = N(3)-methylpseudouridine(1915) in 23S rRNA + S-adenosyl-L-homocysteine + H(+). In terms of biological role, specifically methylates the pseudouridine at position 1915 (m3Psi1915) in 23S rRNA. The chain is Ribosomal RNA large subunit methyltransferase H from Exiguobacterium sp. (strain ATCC BAA-1283 / AT1b).